The primary structure comprises 416 residues: CinA-like protein (416 aa).

This sequence belongs to the CinA family.

The polypeptide is CinA-like protein (Syntrophomonas wolfei subsp. wolfei (strain DSM 2245B / Goettingen)).